A 690-amino-acid chain; its full sequence is Elongation factor G (690 aa).

A tr-type G domain is found at 8–283 (EDYRNFGIMA…AVVDYLPSPL (276 aa)). Residues 17–24 (AHIDAGKT), 81–85 (DTPGH), and 135–138 (NKMD) contribute to the GTP site.

This sequence belongs to the TRAFAC class translation factor GTPase superfamily. Classic translation factor GTPase family. EF-G/EF-2 subfamily.

Its subcellular location is the cytoplasm. Catalyzes the GTP-dependent ribosomal translocation step during translation elongation. During this step, the ribosome changes from the pre-translocational (PRE) to the post-translocational (POST) state as the newly formed A-site-bound peptidyl-tRNA and P-site-bound deacylated tRNA move to the P and E sites, respectively. Catalyzes the coordinated movement of the two tRNA molecules, the mRNA and conformational changes in the ribosome. This Rhodopseudomonas palustris (strain ATCC BAA-98 / CGA009) protein is Elongation factor G.